Reading from the N-terminus, the 545-residue chain is High-affinity glucose transporter 1 (545 aa).

A run of 9 helical transmembrane segments spans residues 29–49, 72–92, 100–120, 125–145, 157–177, 192–212, 291–311, 317–337, and 345–365; these read VFFI…DISS, GFIT…SSFV, LSLL…SSVQ, LIIG…VAPV, GLIG…MFYL, IAWG…FFIP, LTGM…AGYS, VASS…LYFI, and LLIG…GILG. 2 N-linked (GlcNAc...) asparagine glycosylation sites follow: N376 and N387. A run of 2 helical transmembrane segments spans residues 395-415 and 433-453; these read IACC…GIWV and ISTS…PTGF. Residue N455 is glycosylated (N-linked (GlcNAc...) asparagine). A helical membrane pass occupies residues 460–480; the sequence is TYIIYGVFCFAMATHVYFGFP. The interval 524 to 545 is disordered; the sequence is VEHEEDKLMNEDSNSESRENQA.

The protein belongs to the major facilitator superfamily. Sugar transporter (TC 2.A.1.1) family. Interacts with the human complement factors FH and C4BP. Also binds human immunodeficiency virus (HIV) protein gp160.

It localises to the cell membrane. Its function is as follows. High-affinity glucose transporter. Acts as a multifunctional complement-evasion molecule that causes down-regulation of complement activation by acquisition of human complement factors FH and C4BP. Also functions as a human immunodeficiency virus (HIV) receptor via binding the viral gp160 protein. Modulates hyphae formation. This chain is High-affinity glucose transporter 1, found in Candida albicans (strain SC5314 / ATCC MYA-2876) (Yeast).